Reading from the N-terminus, the 206-residue chain is Holliday junction branch migration complex subunit RuvA (206 aa).

The interval 1-64 (MIAKLTGLLD…EDNIQLFGFA (64 aa)) is domain I. The tract at residues 65-143 (DTEERDWFRL…SFGAPAPAAA (79 aa)) is domain II. The segment at 144-154 (TAGKGGAAPAG) is flexible linker. The domain III stretch occupies residues 154 to 206 (GPAGAVADAVSALVNLGYRRVEAFTAVNAVAQRLGPEAGVSDLIRAGLKELSP).

Belongs to the RuvA family. As to quaternary structure, homotetramer. Forms an RuvA(8)-RuvB(12)-Holliday junction (HJ) complex. HJ DNA is sandwiched between 2 RuvA tetramers; dsDNA enters through RuvA and exits via RuvB. An RuvB hexamer assembles on each DNA strand where it exits the tetramer. Each RuvB hexamer is contacted by two RuvA subunits (via domain III) on 2 adjacent RuvB subunits; this complex drives branch migration. In the full resolvosome a probable DNA-RuvA(4)-RuvB(12)-RuvC(2) complex forms which resolves the HJ.

The protein resides in the cytoplasm. Its function is as follows. The RuvA-RuvB-RuvC complex processes Holliday junction (HJ) DNA during genetic recombination and DNA repair, while the RuvA-RuvB complex plays an important role in the rescue of blocked DNA replication forks via replication fork reversal (RFR). RuvA specifically binds to HJ cruciform DNA, conferring on it an open structure. The RuvB hexamer acts as an ATP-dependent pump, pulling dsDNA into and through the RuvAB complex. HJ branch migration allows RuvC to scan DNA until it finds its consensus sequence, where it cleaves and resolves the cruciform DNA. The chain is Holliday junction branch migration complex subunit RuvA from Rhodospirillum centenum (strain ATCC 51521 / SW).